The primary structure comprises 121 residues: Large ribosomal subunit protein uL24 (121 aa).

This sequence belongs to the universal ribosomal protein uL24 family. In terms of assembly, part of the 50S ribosomal subunit.

In terms of biological role, one of two assembly initiator proteins, it binds directly to the 5'-end of the 23S rRNA, where it nucleates assembly of the 50S subunit. Located at the polypeptide exit tunnel on the outside of the subunit. This Methanocorpusculum labreanum (strain ATCC 43576 / DSM 4855 / Z) protein is Large ribosomal subunit protein uL24.